The primary structure comprises 135 residues: NADH-quinone oxidoreductase subunit K (135 aa).

Transmembrane regions (helical) follow at residues Val33 to Gly53, Phe63 to Val83, and Ile95 to Leu115.

It belongs to the complex I subunit 4L family. As to quaternary structure, NDH-1 is composed of 14 different subunits. Subunits NuoA, H, J, K, L, M, N constitute the membrane sector of the complex.

Its subcellular location is the cell inner membrane. The catalysed reaction is a quinone + NADH + 5 H(+)(in) = a quinol + NAD(+) + 4 H(+)(out). Its function is as follows. NDH-1 shuttles electrons from NADH, via FMN and iron-sulfur (Fe-S) centers, to quinones in the respiratory chain. The immediate electron acceptor for the enzyme in this species is believed to be ubiquinone. Couples the redox reaction to proton translocation (for every two electrons transferred, four hydrogen ions are translocated across the cytoplasmic membrane), and thus conserves the redox energy in a proton gradient. This Psychrobacter arcticus (strain DSM 17307 / VKM B-2377 / 273-4) protein is NADH-quinone oxidoreductase subunit K.